The sequence spans 515 residues: Nucleolar protein 58 (515 aa).

The Nop domain occupies 283 to 403 (IAPNLTALVG…VESRLSALEG (121 aa)). The interval 423–515 (EARAYNADAD…KDKKSKKEKK (93 aa)) is disordered. The segment covering 438–448 (VDSDDESDTEE) has biased composition (acidic residues). 2 stretches are compositionally biased toward basic residues: residues 455–470 (KKEKKEKKEKKDKKRK) and 484–515 (KKEKKEKKEKKEKKEKKEKKDKKDKKSKKEKK).

This sequence belongs to the NOP5/NOP56 family.

Its subcellular location is the nucleus. The protein localises to the nucleolus. In terms of biological role, required for pre-18S rRNA processing. May bind microtubules. The protein is Nucleolar protein 58 (NOP58) of Scheffersomyces stipitis (strain ATCC 58785 / CBS 6054 / NBRC 10063 / NRRL Y-11545) (Yeast).